We begin with the raw amino-acid sequence, 55 residues long: uncharacterized protein (55 aa).

The N-terminal stretch at 1–25 (MKFVKAIWPFVAVAIVFMFMSAFKF) is a signal peptide.

This is an uncharacterized protein from Bacillus subtilis (strain 168).